The following is a 445-amino-acid chain: Sporulation protein YkvU (445 aa).

12 helical membrane-spanning segments follow: residues 7–29 (GIIL…NMIL), 39–61 (GLYM…ELPI), 82–104 (AFRM…LPFI), 109–131 (TYHP…TSIA), 144–166 (IAIA…FQWY), 172–194 (MAVL…YLYS), 237–259 (VNAI…GTAA), 269–291 (VAVT…MIPS), 312–334 (IFIT…GPLT), 349–371 (LLWP…IGMG), 376–395 (AFYH…YVLG), and 400–422 (LQML…LHYA).

The protein localises to the forespore membrane. The chain is Sporulation protein YkvU (ykvU) from Bacillus subtilis (strain 168).